Reading from the N-terminus, the 517-residue chain is DNA-binding protein Ikaros (517 aa).

Residues 1-71 are disordered; it reads MDVDEGQDMS…QSDEENGRAC (71 aa). Phosphoserine is present on Ser-13. Thr-23 is modified (phosphothreonine). A compositionally biased stretch (polar residues) spans 37-47; sequence LSTTSGAQQNS. Lys-58 participates in a covalent cross-link: Glycyl lysine isopeptide (Lys-Gly) (interchain with G-Cter in SUMO). Ser-63 and Ser-101 each carry phosphoserine. Residues 117–139 form a C2H2-type 1 zinc finger; that stretch reads LKCDICGIVCIGPNVLMVHKRSH. Thr-140 is modified (phosphothreonine). The C2H2-type 2 zinc-finger motif lies at 144 to 166; sequence FQCNQCGASFTQKGNLLRHIKLH. Residues 153–162 are required for both high-affinity DNA binding and pericentromeric heterochromatin localization; that stretch reads FTQKGNLLRH. Position 167 is a phosphoserine (Ser-167). Residues 172–194 form a C2H2-type 3 zinc finger; that stretch reads FKCHLCNYACRRRDALTGHLRTH. Residues 179–194 are required for both high-affinity DNA binding and pericentromeric heterochromatin localization; that stretch reads YACRRRDALTGHLRTH. The residue at position 195 (Ser-195) is a Phosphoserine. The C2H2-type 4 zinc-finger motif lies at 200–223; the sequence is HKCGYCGRSYKQRSSLEEHKERCH. A Glycyl lysine isopeptide (Lys-Gly) (interchain with G-Cter in SUMO) cross-link involves residue Lys-239. Phosphoserine is present on residues Ser-259, Ser-287, Ser-293, Ser-357, Ser-360, Ser-384, Ser-386, Ser-388, and Ser-392. A disordered region spans residues 376-400; sequence SVSSEREASPSNSCQDSTDTESNAE. Residue Thr-393 is modified to Phosphothreonine. Ser-397 and Ser-440 each carry phosphoserine. 2 consecutive C2H2-type zinc fingers follow at residues 457-479 and 488-512; these read YKCE…MGCH and FECN…RGEH. Residues 463–466 form a required for binding PP1CC region; it reads RVLF.

It belongs to the Ikaros C2H2-type zinc-finger protein family. As to quaternary structure, heterodimer with other IKAROS family members. Interacts with IKZF4 and IKZF5. Component of the chromatin-remodeling NuRD repressor complex which includes at least HDAC1, HDAC2, RBBP4, RBBP7, IKZF1, MTA2, MBD2, MBD3, MTA1L1, CHD3 and CHD4. Interacts directly with the CHD4 component of the NuRD complex. Interacts directly with SMARCA4; the interaction associates IKFZ1 with the BAF complex. Interacts with SUMO1; the interaction sumoylates IKAROS, promoted by PIAS2 and PIAS3. Interacts with PIAS2 (isoform alpha); the interaction promotes sumoylation and reduces transcription repression. Interacts, to a lesser extent, with PIAS3. Interacts with PPP1CC; the interaction targets PPP1CC to pericentromeric heterochromatin, dephosphorylates IKAROS, stabilizes it and prevents it from degradation. Interacts with IKZF3. In terms of processing, phosphorylation at Ser-357 and Ser-360 downstream of SYK induces nuclear translocation. Phosphorylation controls cell-cycle progression from late G(1) stage to S stage. Hyperphosphorylated during G2/M phase. Dephosphorylated state during late G(1) phase. Phosphorylation on Thr-140 is required for DNA and pericentromeric location during mitosis. CK2 is the main kinase, in vitro. GSK3 and CDK may also contribute to phosphorylation of the C-terminal serine and threonine residues. Phosphorylation on these C-terminal residues reduces the DNA-binding ability. Phosphorylation/dephosphorylation events on Ser-13 and Ser-293 regulate TDT expression during thymocyte differentiation. Dephosphorylation by protein phosphatase 1 regulates stability and pericentromeric heterochromatin location. Phosphorylated in both lymphoid and non-lymphoid tissues. Post-translationally, sumoylated. Simultaneous sumoylation on the 2 sites results in a loss of both HDAC-dependent and HDAC-independent repression. Has no effect on pericentromeric heterochromatin location. Desumoylated by SENP1. Polyubiquitinated. In terms of tissue distribution, strongly expressed in T-cells and their progenitors,in B-cells, and in all early embryonic retinal progenitor cells (RPCs). Isoforms V and VI are the predominant isoforms in lymphocytes.

The protein resides in the nucleus. It is found in the cytoplasm. In terms of biological role, transcription regulator of hematopoietic cell differentiation. Binds gamma-satellite DNA. Binds with higher affinity to gamma satellite A. Plays a role in the development of lymphocytes, B- and T-cells. Binds and activates the enhancer (delta-A element) of the CD3-delta gene. Repressor of the TDT (terminal deoxynucleotidyltransferase) gene during thymocyte differentiation. Regulates transcription through association with both HDAC-dependent and HDAC-independent complexes. Targets the 2 chromatin-remodeling complexes, NuRD and BAF (SWI/SNF), in a single complex (PYR complex), to the beta-globin locus in adult erythrocytes. Increases normal apoptosis in adult erythroid cells. Confers early temporal competence to retinal progenitor cells (RPCs). Function is isoform-specific and is modulated by dominant-negative inactive isoforms. The chain is DNA-binding protein Ikaros (Ikzf1) from Mus musculus (Mouse).